Consider the following 214-residue polypeptide: Ribonuclease HII (214 aa).

The RNase H type-2 domain maps to 18-208; it reads SRVVGVDEVG…SLLPSEAHLC (191 aa). Asp24, Glu25, and Asp116 together coordinate a divalent metal cation.

The protein belongs to the RNase HII family. Mn(2+) serves as cofactor. The cofactor is Mg(2+).

It localises to the cytoplasm. The enzyme catalyses Endonucleolytic cleavage to 5'-phosphomonoester.. Endonuclease that specifically degrades the RNA of RNA-DNA hybrids. This chain is Ribonuclease HII, found in Thermosynechococcus vestitus (strain NIES-2133 / IAM M-273 / BP-1).